A 214-amino-acid polypeptide reads, in one-letter code: Probable transaldolase (214 aa).

Lys83 serves as the catalytic Schiff-base intermediate with substrate.

The protein belongs to the transaldolase family. Type 3B subfamily.

It localises to the cytoplasm. The catalysed reaction is D-sedoheptulose 7-phosphate + D-glyceraldehyde 3-phosphate = D-erythrose 4-phosphate + beta-D-fructose 6-phosphate. The protein operates within carbohydrate degradation; pentose phosphate pathway; D-glyceraldehyde 3-phosphate and beta-D-fructose 6-phosphate from D-ribose 5-phosphate and D-xylulose 5-phosphate (non-oxidative stage): step 2/3. Its function is as follows. Transaldolase is important for the balance of metabolites in the pentose-phosphate pathway. This is Probable transaldolase from Streptococcus equi subsp. zooepidemicus (strain MGCS10565).